The sequence spans 462 residues: Retinoic acid receptor alpha (462 aa).

The modulating stretch occupies residues 1–87 (MASNSSSCPT…PPPLPRIYKP (87 aa)). The segment covering 52–64 (GYSTPSPATIETQ) has biased composition (polar residues). Positions 52-77 (GYSTPSPATIETQSSSSEEIVPSPPS) are disordered. The residue at position 77 (S77) is a Phosphoserine; by CDK7. 2 consecutive NR C4-type zinc fingers follow at residues 88-108 (CFVC…CEGC) and 124-148 (CHRD…LQKC). A DNA-binding region (nuclear receptor) is located at residues 88–153 (CFVCQDKSSG…RLQKCFEVGM (66 aa)). Phosphoserine; by PKB/AKT1 is present on S96. The interval 154–182 (SKESVRNDRNKKKKEVPKPECSESYTLTP) is hinge. Residues K166 and K171 each participate in a glycyl lysine isopeptide (Lys-Gly) (interchain with G-Cter in SUMO) cross-link. Residues 183–417 (EVGELIEKVR…PLIQEMLENS (235 aa)) enclose the NR LBD domain. S219 is subject to Phosphoserine; by PKA. C235 is a binding site for all-trans-retinoate. Positions 254-258 (IADQI) match the UBR5-degron motif. S287 contributes to the all-trans-retinoate binding site. Residue S369 is modified to Phosphoserine; by PKA. K399 is covalently cross-linked (Glycyl lysine isopeptide (Lys-Gly) (interchain with G-Cter in SUMO)). The required for binding corepressor NCOR1 stretch occupies residues 404-419 (GSMPPLIQEMLENSEG). A 9aaTAD motif is present at residues 408–416 (PLIQEMLEN). Positions 419 to 462 (GLDTLSGQPGGGGRDGGGLAPPPGSCSPSLSPSSNRSSPATHSP) are disordered. A compositionally biased stretch (gly residues) spans 426–437 (QPGGGGRDGGGL). Low complexity predominate over residues 444–462 (CSPSLSPSSNRSSPATHSP).

Belongs to the nuclear hormone receptor family. NR1 subfamily. As to quaternary structure, heterodimer; with RXRA (via C-terminus); association with RXRA is enhanced by pulsatile shear stress. Binds DNA preferentially as a heterodimer. RXRA serves as enhancer to induce RARA binding to RARE. Interacts with RXRG. Interacts with coactivators NCOA3 and NCOA6. Interacts with NCOA7; the interaction requires ligand-binding. Interacts (via the ligand-binding domain) with PRAME; the interaction is ligand (retinoic acid)-dependent. Interacts with AKT1; the interaction phosphorylates RARA and represses transactivation. Interacts with PRKAR1A; the interaction negatively regulates RARA transcriptional activity. Interacts with NCOR1 and NCOR2. Interacts with PRMT2. Interacts with LRIF1. Interacts with ASXL1 and NCOA1. Interacts with ACTN4. In a complex with HDAC3, HDAC5 and HDAC7; the HDACs serve as corepressors of RARA, causing its deacetylation and inhibition of RARE DNA element binding; association with HDAC3, HDAC5 and HDAC7 is increased upon oscillatory shear stress. Interacts with CDK7. In the absence of hormonal ligand, interacts with TACC1. Post-translationally, phosphorylated on serine and threonine residues. Phosphorylation does not change during cell cycle. Phosphorylation on Ser-77 is crucial for transcriptional activity. Phosphorylation by AKT1 is required for the repressor activity but has no effect on DNA binding, protein stability nor subcellular localization. Phosphorylated by PKA in vitro. This phosphorylation on Ser-219 and Ser-369 is critical for ligand binding, nuclear localization and transcriptional activity in response to FSH signaling. In terms of processing, sumoylated with SUMO2, mainly on Lys-399 which is also required for SENP6 binding. On all-trans retinoic acid (ATRA) binding, a conformational change may occur that allows sumoylation on two additional site, Lys-166 and Lys-171. Probably desumoylated by SENP6. Sumoylation levels determine nuclear localization and regulate ATRA-mediated transcriptional activity. Trimethylation enhances heterodimerization with RXRA and positively modulates the transcriptional activation. Post-translationally, ubiquitinated by UBR5, leading to its degradation: UBR5 specifically recognizes and binds ligand-bound RARA when it is not associated with coactivators (NCOAs). In presence of NCOAs, the UBR5-degron is not accessible, preventing its ubiquitination and degradation. In terms of processing, acetylated; acetylation is increased upon pulsatile shear stress and decreased upon oscillatory shear stress. As to expression, expressed in monocytes.

Its subcellular location is the nucleus. It is found in the cytoplasm. Receptor for retinoic acid. Retinoic acid receptors bind as heterodimers to their target response elements in response to their ligands, all-trans or 9-cis retinoic acid, and regulate gene expression in various biological processes. The RXR/RAR heterodimers bind to the retinoic acid response elements (RARE) composed of tandem 5'-AGGTCA-3' sites known as DR1-DR5. In the absence of ligand, the RXR-RAR heterodimers associate with a multiprotein complex containing transcription corepressors that induce histone deacetylation, chromatin condensation and transcriptional suppression. On ligand binding, the corepressors dissociate from the receptors and associate with the coactivators leading to transcriptional activation. Formation of a complex with histone deacetylases might lead to inhibition of RARE DNA element binding and to transcriptional repression. Transcriptional activation and RARE DNA element binding might be supported by the transcription factor KLF2. RARA plays an essential role in the regulation of retinoic acid-induced germ cell development during spermatogenesis. Has a role in the survival of early spermatocytes at the beginning prophase of meiosis. In Sertoli cells, may promote the survival and development of early meiotic prophase spermatocytes. In concert with RARG, required for skeletal growth, matrix homeostasis and growth plate function. Together with RXRA, positively regulates microRNA-10a expression, thereby inhibiting the GATA6/VCAM1 signaling response to pulsatile shear stress in vascular endothelial cells. In association with HDAC3, HDAC5 and HDAC7 corepressors, plays a role in the repression of microRNA-10a and thereby promotes the inflammatory response. The protein is Retinoic acid receptor alpha (RARA) of Homo sapiens (Human).